The sequence spans 636 residues: 1-deoxy-D-xylulose-5-phosphate synthase (636 aa).

Thiamine diphosphate contacts are provided by residues H75 and 116-118 (AHS). D147 serves as a coordination point for Mg(2+). Residues 148–149 (GA), N177, Y288, and E370 each bind thiamine diphosphate. Residue N177 coordinates Mg(2+).

Belongs to the transketolase family. DXPS subfamily. As to quaternary structure, homodimer. Mg(2+) serves as cofactor. Thiamine diphosphate is required as a cofactor.

It catalyses the reaction D-glyceraldehyde 3-phosphate + pyruvate + H(+) = 1-deoxy-D-xylulose 5-phosphate + CO2. It participates in metabolic intermediate biosynthesis; 1-deoxy-D-xylulose 5-phosphate biosynthesis; 1-deoxy-D-xylulose 5-phosphate from D-glyceraldehyde 3-phosphate and pyruvate: step 1/1. Functionally, catalyzes the acyloin condensation reaction between C atoms 2 and 3 of pyruvate and glyceraldehyde 3-phosphate to yield 1-deoxy-D-xylulose-5-phosphate (DXP). This is 1-deoxy-D-xylulose-5-phosphate synthase from Ralstonia nicotianae (strain ATCC BAA-1114 / GMI1000) (Ralstonia solanacearum).